A 42-amino-acid chain; its full sequence is Potassium channel toxin gamma-KTx 3.4 (42 aa).

Disulfide bonds link cysteine 5–cysteine 23, cysteine 11–cysteine 34, cysteine 20–cysteine 39, and cysteine 24–cysteine 41.

Belongs to the ergtoxin family. Gamma-KTx 3 subfamily. Expressed by the venom gland.

The protein localises to the secreted. Blocks Kv11/ERG potassium channels. The polypeptide is Potassium channel toxin gamma-KTx 3.4 (Centruroides gracilis (Slenderbrown scorpion)).